An 81-amino-acid polypeptide reads, in one-letter code: Salivary thrombin inhibitor anophelin (81 aa).

The signal sequence occupies residues 1–22 (MANKLFLISLLCVVLVAKIAQA). Asn-45 is a glycosylation site (N-linked (GlcNAc...) asparagine). The blocks active site cleft of host thrombin in a reverse direction compared to substrates stretch occupies residues 70 to 73 (DPGR).

The protein belongs to the anophelin family. In terms of assembly, interacts with human F2 (thrombin); the interaction results in thrombin inhibition.

Its subcellular location is the secreted. In terms of biological role, salivary protein with anticoagulant activity that inhibits host thrombin (F2). The polypeptide is Salivary thrombin inhibitor anophelin (Anopheles darlingi (Mosquito)).